The chain runs to 535 residues: CTP synthase (535 aa).

The segment at 1–270 (MSKNTKYVFV…DRLVCEKLGL (270 aa)) is amidoligase domain. Serine 16 contributes to the CTP binding site. Serine 16 is a binding site for UTP. Position 17 to 22 (17 to 22 (SLGKGI)) interacts with ATP. Tyrosine 57 contributes to the L-glutamine binding site. An ATP-binding site is contributed by aspartate 74. Positions 74 and 144 each coordinate Mg(2+). CTP is bound by residues 151-153 (DIE), 191-196 (KTKPTQ), and lysine 227. Residues 191–196 (KTKPTQ) and lysine 227 contribute to the UTP site. The Glutamine amidotransferase type-1 domain occupies 295-535 (KIALVGKYVE…GFVGAALNNK (241 aa)). An L-glutamine-binding site is contributed by glycine 357. The active-site Nucleophile; for glutamine hydrolysis is the cysteine 384. L-glutamine contacts are provided by residues 385–388 (LGMQ), glutamate 408, and arginine 465. Residues histidine 510 and glutamate 512 contribute to the active site.

The protein belongs to the CTP synthase family. As to quaternary structure, homotetramer.

The catalysed reaction is UTP + L-glutamine + ATP + H2O = CTP + L-glutamate + ADP + phosphate + 2 H(+). It carries out the reaction L-glutamine + H2O = L-glutamate + NH4(+). It catalyses the reaction UTP + NH4(+) + ATP = CTP + ADP + phosphate + 2 H(+). Its pathway is pyrimidine metabolism; CTP biosynthesis via de novo pathway; CTP from UDP: step 2/2. With respect to regulation, allosterically activated by GTP, when glutamine is the substrate; GTP has no effect on the reaction when ammonia is the substrate. The allosteric effector GTP functions by stabilizing the protein conformation that binds the tetrahedral intermediate(s) formed during glutamine hydrolysis. Inhibited by the product CTP, via allosteric rather than competitive inhibition. In terms of biological role, catalyzes the ATP-dependent amination of UTP to CTP with either L-glutamine or ammonia as the source of nitrogen. Regulates intracellular CTP levels through interactions with the four ribonucleotide triphosphates. The polypeptide is CTP synthase (Clostridium perfringens (strain ATCC 13124 / DSM 756 / JCM 1290 / NCIMB 6125 / NCTC 8237 / Type A)).